A 110-amino-acid chain; its full sequence is MGIKILLILGLLTLAVVAESANATWTLTKSCVNGQGCIGEDGELDYLMDSETNRRQLAARRSYISYGALRKNNVPCSRRGRSYYDCKKRKRANPYRRGCSVITHCYRQTS.

Positions 1–23 (MGIKILLILGLLTLAVVAESANA) are cleaved as a signal peptide. Residues 24–58 (TWTLTKSCVNGQGCIGEDGELDYLMDSETNRRQLA) constitute a propeptide, removed in mature form. 2 cysteine pairs are disulfide-bonded: C76–C86 and C99–C105.

The protein belongs to the plant rapid alkalinization factor (RALF) family. Post-translationally, proteolytically cleaved, probably by S1P, a subtilisin-like serine protease (subtilase).

It is found in the secreted. In terms of biological role, cell signaling peptide that may regulate plant stress, growth, and development. Mediates a rapid alkalinization of extracellular space by mediating a transient increase in the cytoplasmic Ca(2+) concentration leading to a calcium-dependent signaling events through a cell surface receptor and a concomitant activation of some intracellular mitogen-activated protein kinases. The sequence is that of Protein RALF-like 19 (RALFL19) from Arabidopsis thaliana (Mouse-ear cress).